The chain runs to 427 residues: Phosphoribosylamine--glycine ligase (427 aa).

The region spanning 110–315 is the ATP-grasp domain; the sequence is KDFCQRHGLP…IVPILLAAAK (206 aa). 136–196 is a binding site for ATP; that stretch reads LDTLEAPFVI…EEFMHGEEAS (61 aa). 2 residues coordinate Mg(2+): glutamate 285 and asparagine 287.

Belongs to the GARS family. The cofactor is Mg(2+). Requires Mn(2+) as cofactor.

It catalyses the reaction 5-phospho-beta-D-ribosylamine + glycine + ATP = N(1)-(5-phospho-beta-D-ribosyl)glycinamide + ADP + phosphate + H(+). The protein operates within purine metabolism; IMP biosynthesis via de novo pathway; N(1)-(5-phospho-D-ribosyl)glycinamide from 5-phospho-alpha-D-ribose 1-diphosphate: step 2/2. The polypeptide is Phosphoribosylamine--glycine ligase (Caulobacter vibrioides (strain ATCC 19089 / CIP 103742 / CB 15) (Caulobacter crescentus)).